The sequence spans 193 residues: MKLSKSTLVFSALLVILAAASAAPANQFIKTSCTLTTYPAVCEQSLSAYAKTIQNNPQELASTALQVSLTRTQQAQTFMKRLNKFKGLKARQYAAIHDCLEEVEDSLDRVSRSCDEMKNLSHAKGNDFTFRMSNVETWVSAALTDETTCMDGFAGKGMDGKIKESVRAQVVAVARVTSNALALVNNFAAKHKH.

The signal sequence occupies residues 1–22 (MKLSKSTLVFSALLVILAAASA).

This chain is 21 kDa protein, found in Daucus carota (Wild carrot).